A 285-amino-acid chain; its full sequence is Polyamine aminopropyltransferase (285 aa).

In terms of domain architecture, PABS spans E5 to D238. Q33 is a binding site for S-methyl-5'-thioadenosine. Residues H64 and D88 each contribute to the spermidine site. S-methyl-5'-thioadenosine-binding positions include E108 and D140 to G141. The Proton acceptor role is filled by D158. D158–D161 provides a ligand contact to spermidine. Residue P165 coordinates S-methyl-5'-thioadenosine.

It belongs to the spermidine/spermine synthase family. Homodimer or homotetramer.

It localises to the cytoplasm. The enzyme catalyses S-adenosyl 3-(methylsulfanyl)propylamine + putrescine = S-methyl-5'-thioadenosine + spermidine + H(+). It functions in the pathway amine and polyamine biosynthesis; spermidine biosynthesis; spermidine from putrescine: step 1/1. Its function is as follows. Catalyzes the irreversible transfer of a propylamine group from the amino donor S-adenosylmethioninamine (decarboxy-AdoMet) to putrescine (1,4-diaminobutane) to yield spermidine. This is Polyamine aminopropyltransferase from Erwinia tasmaniensis (strain DSM 17950 / CFBP 7177 / CIP 109463 / NCPPB 4357 / Et1/99).